The sequence spans 579 residues: Plastidial pyruvate kinase 2 (579 aa).

The N-terminal 63 residues, 1–63 (MAQVVATRSI…SRRVVDTTVR (63 aa)), are a transit peptide targeting the chloroplast. Residues 6–24 (ATRSIQGSMLSPNGGSVST) show a composition bias toward polar residues. The disordered stretch occupies residues 6 to 26 (ATRSIQGSMLSPNGGSVSTRS). Arg-140 contacts substrate. 4 residues coordinate K(+): Asn-142, Ser-144, Asp-175, and Thr-176. Position 142-145 (142-145 (NMSH)) interacts with ATP. Arg-182 contributes to the ATP binding site. Substrate is bound at residue Lys-325. Residue Glu-327 participates in Mg(2+) binding. Residues Gly-350, Asp-351, and Thr-383 each contribute to the substrate site. A Mg(2+)-binding site is contributed by Asp-351.

It belongs to the pyruvate kinase family. In terms of assembly, oligomer of alpha and beta subunits. Requires Mg(2+) as cofactor. K(+) is required as a cofactor. As to expression, mostly expressed in seeds, and, to a lower extent, in roots, leaves (veins and trichomes), inflorescences, siliques, pollen (grains and tubes) and flowers (sepals and petals).

The protein localises to the plastid. Its subcellular location is the chloroplast stroma. The protein resides in the mitochondrion. It catalyses the reaction pyruvate + ATP = phosphoenolpyruvate + ADP + H(+). The protein operates within carbohydrate degradation; glycolysis; pyruvate from D-glyceraldehyde 3-phosphate: step 5/5. Functionally, required for plastidial pyruvate kinase activity. Involved in seed oil accumulation, embryo development and seed storage compounds mobilization upon germination. This Arabidopsis thaliana (Mouse-ear cress) protein is Plastidial pyruvate kinase 2 (PKP2).